The following is a 632-amino-acid chain: 1-deoxy-D-xylulose-5-phosphate synthase (632 aa).

Residues histidine 79 and 120-122 each bind thiamine diphosphate; that span reads GHA. Aspartate 151 contacts Mg(2+). Thiamine diphosphate contacts are provided by residues 152–153, asparagine 180, phenylalanine 292, and glutamate 376; that span reads GS. Position 180 (asparagine 180) interacts with Mg(2+).

This sequence belongs to the transketolase family. DXPS subfamily. In terms of assembly, homodimer. The cofactor is Mg(2+). It depends on thiamine diphosphate as a cofactor.

The enzyme catalyses D-glyceraldehyde 3-phosphate + pyruvate + H(+) = 1-deoxy-D-xylulose 5-phosphate + CO2. Its pathway is metabolic intermediate biosynthesis; 1-deoxy-D-xylulose 5-phosphate biosynthesis; 1-deoxy-D-xylulose 5-phosphate from D-glyceraldehyde 3-phosphate and pyruvate: step 1/1. Functionally, catalyzes the acyloin condensation reaction between C atoms 2 and 3 of pyruvate and glyceraldehyde 3-phosphate to yield 1-deoxy-D-xylulose-5-phosphate (DXP). The polypeptide is 1-deoxy-D-xylulose-5-phosphate synthase (Azobacteroides pseudotrichonymphae genomovar. CFP2).